We begin with the raw amino-acid sequence, 194 residues long: Imidazoleglycerol-phosphate dehydratase (194 aa).

It belongs to the imidazoleglycerol-phosphate dehydratase family.

It localises to the cytoplasm. It carries out the reaction D-erythro-1-(imidazol-4-yl)glycerol 3-phosphate = 3-(imidazol-4-yl)-2-oxopropyl phosphate + H2O. It functions in the pathway amino-acid biosynthesis; L-histidine biosynthesis; L-histidine from 5-phospho-alpha-D-ribose 1-diphosphate: step 6/9. This is Imidazoleglycerol-phosphate dehydratase from Thermus thermophilus (strain ATCC BAA-163 / DSM 7039 / HB27).